The following is a 236-amino-acid chain: MHVVVPFAADTPKTRLSEVLSPPERTALARAMLADVLSAITATGHVPTVLSTSPLSLENGCSCDDLPSTTPPGLESASDIPVTVDDRPLTAAVNAQLEAAEEPVAIVMADLALATPAALSTLFASGAADGVAIAPGRGGGTNALVVRHPDFRVDYHGASYLDHREHAAEIGAPLESVDSFRLGTDVDEPADLVEVLIHGRETAADGGESRTATRLRELGFELETTDGRVTVARDRS.

It belongs to the CofC family. Homodimer.

It catalyses the reaction (2S)-2-phospholactate + GTP + H(+) = (2S)-lactyl-2-diphospho-5'-guanosine + diphosphate. It participates in cofactor biosynthesis; coenzyme F420 biosynthesis. Guanylyltransferase that catalyzes the activation of (2S)-2-phospholactate (2-PL) as (2S)-lactyl-2-diphospho-5'-guanosine, via the condensation of 2-PL with GTP. It is involved in the biosynthesis of coenzyme F420, a hydride carrier cofactor. This Natrialba magadii (strain ATCC 43099 / DSM 3394 / CCM 3739 / CIP 104546 / IAM 13178 / JCM 8861 / NBRC 102185 / NCIMB 2190 / MS3) (Natronobacterium magadii) protein is 2-phospho-L-lactate guanylyltransferase.